Here is a 94-residue protein sequence, read N- to C-terminus: Cell division protein FtsB (94 aa).

Over 1–8 the chain is Cytoplasmic; that stretch reads MRLRSPYW. A helical membrane pass occupies residues 9 to 26; the sequence is LFVVLILALAGLQYRLWV. Residues 27–94 are Periplasmic-facing; sequence GDGSLAQVRD…DGETLYQLAK (68 aa). The stretch at 31 to 78 forms a coiled coil; sequence LAQVRDLQKQIADQHGENERLLERNRILEAEVAELKKGTETVEERARH.

It belongs to the FtsB family. As to quaternary structure, part of a complex composed of FtsB, FtsL and FtsQ.

It is found in the cell inner membrane. Its function is as follows. Essential cell division protein. May link together the upstream cell division proteins, which are predominantly cytoplasmic, with the downstream cell division proteins, which are predominantly periplasmic. This is Cell division protein FtsB from Pseudomonas aeruginosa (strain ATCC 15692 / DSM 22644 / CIP 104116 / JCM 14847 / LMG 12228 / 1C / PRS 101 / PAO1).